Consider the following 161-residue polypeptide: Small ribosomal subunit protein uS9 (161 aa).

This sequence belongs to the universal ribosomal protein uS9 family.

The sequence is that of Small ribosomal subunit protein uS9 from Bartonella tribocorum (strain CIP 105476 / IBS 506).